A 578-amino-acid chain; its full sequence is Matrix metalloproteinase-17 (578 aa).

2 disordered regions span residues 1 to 22 (MGRR…PGPG) and 107 to 133 (PRCS…TKWS). A signal peptide spans 1–39 (MGRRPRGPGSPRGPGPPRPGPGLPPLLLVLALAAHGGCA). The span at 11-22 (PRGPGPPRPGPG) shows a compositional bias: pro residues. Positions 40–124 (APAPRAEDLS…PPGAQSRRKR (85 aa)) are excised as a propeptide. The Cysteine switch motif lies at 107-114 (PRCSLPDL). Cysteine 109 contributes to the Zn(2+) binding site. The N-linked (GlcNAc...) asparagine glycan is linked to asparagine 136. Histidine 247 is a binding site for Zn(2+). The active site involves glutamate 248. Histidine 251 and histidine 257 together coordinate Zn(2+). The segment at 301–334 (PTAQLDTPEPEEPPLLPEPPNNRSSTPPQKDVPH) is disordered. The N-linked (GlcNAc...) asparagine glycan is linked to asparagine 322. Hemopexin repeat units follow at residues 333 to 382 (PHRC…WRGL), 386 to 432 (LDSV…SLPP), 436 to 479 (DAVF…WRGV), and 480 to 527 (PSML…WLVC). An intrachain disulfide couples cysteine 336 to cysteine 527. Serine 558 is lipidated: GPI-anchor amidated serine. Positions 559 to 578 (DAHRLALPSLLLLTPLLWGL) are cleaved as a propeptide — removed in mature form.

Belongs to the peptidase M10A family. Zn(2+) is required as a cofactor. It depends on Ca(2+) as a cofactor. Post-translationally, the precursor is cleaved by a furin endopeptidase. Expressed by monocytes and macrophages.

The protein resides in the cell membrane. It localises to the secreted. It is found in the extracellular space. Its subcellular location is the extracellular matrix. Endopeptidase that degrades various components of the extracellular matrix, such as fibrin. May be involved in the activation of membrane-bound precursors of growth factors or inflammatory mediators, such as tumor necrosis factor-alpha. May also be involved in tumoral process. Not obvious if able to proteolytically activate progelatinase A. Does not hydrolyze collagen types I, II, III, IV and V, gelatin, fibronectin, laminin, decorin nor alpha1-antitrypsin. This Mus musculus (Mouse) protein is Matrix metalloproteinase-17 (Mmp17).